A 206-amino-acid chain; its full sequence is Small ribosomal subunit protein uS4 (206 aa).

The region spanning 96–158 is the S4 RNA-binding domain; that stretch reads GRLDNVVYRM…AKKQSRIKAA (63 aa).

This sequence belongs to the universal ribosomal protein uS4 family. As to quaternary structure, part of the 30S ribosomal subunit. Contacts protein S5. The interaction surface between S4 and S5 is involved in control of translational fidelity.

Functionally, one of the primary rRNA binding proteins, it binds directly to 16S rRNA where it nucleates assembly of the body of the 30S subunit. With S5 and S12 plays an important role in translational accuracy. This Vibrio cholerae serotype O1 (strain ATCC 39541 / Classical Ogawa 395 / O395) protein is Small ribosomal subunit protein uS4.